The chain runs to 510 residues: Peptide transporter imqJ (510 aa).

3 consecutive transmembrane segments (helical) span residues 1–21 (MVNQ…AVVA), 31–51 (IIFS…SSLP), and 57–77 (GISL…TGGI). N80 carries an N-linked (GlcNAc...) asparagine glycan. The next 4 helical transmembrane spans lie at 116 to 136 (IFTT…LITI), 143 to 163 (FSAA…IVLV), 231 to 251 (IFIL…NFIS), and 269 to 289 (IDPI…FPFL). One can recognise a Fe2OG dioxygenase domain in the interval 348–468 (PAASEIRLLY…RCSSVFFFKA (121 aa)). 2 residues coordinate Fe cation: H377 and D379. The N-linked (GlcNAc...) asparagine glycan is linked to N421. H439 serves as a coordination point for Fe cation. R459 provides a ligand contact to 2-oxoglutarate.

It belongs to the major facilitator superfamily. Proton-dependent oligopeptide transporter (POT/PTR) (TC 2.A.17) family.

The protein localises to the membrane. Functionally, peptide transporter; part of the gene cluster that mediates the biosynthesis of imizoquins A to D, tripeptide-derived alkaloids that serve a protective role against oxidative stress that are essential for normal germination. In Aspergillus flavus (strain ATCC 200026 / FGSC A1120 / IAM 13836 / NRRL 3357 / JCM 12722 / SRRC 167), this protein is Peptide transporter imqJ.